A 343-amino-acid polypeptide reads, in one-letter code: MPVYCKSQCGNRAVLRRPKTGDALCKECFFAAFEAEIHHTISSNQLFQPGQKIAVAASGGKDSTVLAHVLKLLNEKHNYGLDLVLLSIDEGISGYRDDSLETVKQNRDDYQMSLKILSYEELYGWTMDRIVAQIGRSNNCTFCGVFRRQALDRGAKLLQVDSIATGHNADDIAETVLMNILRGDTARLRRCTDIRTGGGEDSIPRVKPLKYSYEKDIVMYAHYKKLVYFSTECVFAPNAYRGHARAFLKDLEKVRPSVIMDIIYSGEQLRFKDTVKKPVRGTCSRCGFVSSQQPCKACVLLEGLNRGLPKLGIGKKSKGDRMIAEQNRELDLRERANLVKNDF.

It belongs to the TtcA family. CTU1/NCS6/ATPBD3 subfamily.

Its subcellular location is the cytoplasm. The protein operates within tRNA modification; 5-methoxycarbonylmethyl-2-thiouridine-tRNA biosynthesis. Functionally, plays a central role in 2-thiolation of mcm(5)S(2)U at tRNA wobble positions of tRNA(Lys), tRNA(Glu) and tRNA(Gln). Directly binds tRNAs and probably acts by catalyzing adenylation of tRNAs, an intermediate required for 2-thiolation. It is unclear whether it acts as a sulfurtransferase that transfers sulfur from thiocarboxylated URM1 onto the uridine of tRNAs at wobble position. This chain is Cytoplasmic tRNA 2-thiolation protein 1, found in Drosophila willistoni (Fruit fly).